A 528-amino-acid polypeptide reads, in one-letter code: U3 small nucleolar RNA-associated protein 15 homolog (528 aa).

Ala-2 is modified (N-acetylalanine). 7 WD repeats span residues 36 to 75 (KEFG…PVKT), 78 to 117 (RFKD…PLRQ), 120 to 159 (GHTK…EILT), 162 to 202 (EHSD…NVLC), 204 to 242 (EHGQ…QLLV), 246 to 285 (NHHK…VVHS), and 287 to 326 (DYAA…KKES). Lys-249 is covalently cross-linked (Glycyl lysine isopeptide (Lys-Gly) (interchain with G-Cter in SUMO2)). The tract at residues 508 to 528 (AELPEEKTESPRQPSDTDKNS) is disordered. Residues 511–528 (PEEKTESPRQPSDTDKNS) show a composition bias toward basic and acidic residues.

As to quaternary structure, part of the small subunit (SSU) processome, composed of more than 70 proteins and the RNA chaperone small nucleolar RNA (snoRNA) U3. May be a component of the proposed t-UTP subcomplex of the ribosomal small subunit (SSU) processome containing at least UTP4, WDR43, HEATR1, UTP15, WDR75. Interacts directly with UTP4 and WDR43.

Its subcellular location is the nucleus. It localises to the nucleolus. Its function is as follows. Ribosome biogenesis factor. Involved in nucleolar processing of pre-18S ribosomal RNA. Required for optimal pre-ribosomal RNA transcription by RNA polymerase I. Part of the small subunit (SSU) processome, first precursor of the small eukaryotic ribosomal subunit. During the assembly of the SSU processome in the nucleolus, many ribosome biogenesis factors, an RNA chaperone and ribosomal proteins associate with the nascent pre-rRNA and work in concert to generate RNA folding, modifications, rearrangements and cleavage as well as targeted degradation of pre-ribosomal RNA by the RNA exosome. The protein is U3 small nucleolar RNA-associated protein 15 homolog of Rattus norvegicus (Rat).